The following is a 145-amino-acid chain: uncharacterized protein (145 aa).

Substrate is bound by residues Val97 and Asn121.

The protein belongs to the D-isomer specific 2-hydroxyacid dehydrogenase family. FDH subfamily.

This is an uncharacterized protein from Saccharomyces cerevisiae (strain ATCC 204508 / S288c) (Baker's yeast).